A 181-amino-acid polypeptide reads, in one-letter code: Mating-type protein A1 (181 aa).

Residues 122-181 constitute a DNA-binding region (homeobox); it reads DKKKRRHIPESSKELLEKAFKVKRFPNSKERERIARECGISPLQVRVWFTNKRARSKSRA.

This sequence belongs to the MATA1 family.

It localises to the nucleus. Mating type proteins are sequence specific DNA-binding proteins that act as master switches in yeast differentiation by controlling gene expression in a cell type-specific fashion. This chain is Mating-type protein A1 (MATA1), found in Pichia angusta (Yeast).